A 163-amino-acid polypeptide reads, in one-letter code: Putative pre-16S rRNA nuclease (163 aa).

It belongs to the YqgF nuclease family.

The protein resides in the cytoplasm. Could be a nuclease involved in processing of the 5'-end of pre-16S rRNA. This chain is Putative pre-16S rRNA nuclease, found in Rhodopseudomonas palustris (strain BisB18).